Consider the following 502-residue polypeptide: ATP synthase subunit alpha (502 aa).

169–176 (GDRQTGKT) is a binding site for ATP.

Belongs to the ATPase alpha/beta chains family. F-type ATPases have 2 components, CF(1) - the catalytic core - and CF(0) - the membrane proton channel. CF(1) has five subunits: alpha(3), beta(3), gamma(1), delta(1), epsilon(1). CF(0) has three main subunits: a(1), b(2) and c(9-12). The alpha and beta chains form an alternating ring which encloses part of the gamma chain. CF(1) is attached to CF(0) by a central stalk formed by the gamma and epsilon chains, while a peripheral stalk is formed by the delta and b chains.

Its subcellular location is the cell inner membrane. It catalyses the reaction ATP + H2O + 4 H(+)(in) = ADP + phosphate + 5 H(+)(out). Produces ATP from ADP in the presence of a proton gradient across the membrane. The alpha chain is a regulatory subunit. The polypeptide is ATP synthase subunit alpha (Geotalea daltonii (strain DSM 22248 / JCM 15807 / FRC-32) (Geobacter daltonii)).